A 123-amino-acid chain; its full sequence is Large ribosomal subunit protein bL12 (123 aa).

Belongs to the bacterial ribosomal protein bL12 family. As to quaternary structure, homodimer. Part of the ribosomal stalk of the 50S ribosomal subunit. Forms a multimeric L10(L12)X complex, where L10 forms an elongated spine to which 2 to 4 L12 dimers bind in a sequential fashion. Binds GTP-bound translation factors.

Forms part of the ribosomal stalk which helps the ribosome interact with GTP-bound translation factors. Is thus essential for accurate translation. This Neisseria gonorrhoeae (strain NCCP11945) protein is Large ribosomal subunit protein bL12.